The chain runs to 244 residues: Acetoacetate decarboxylase (244 aa).

Lys-115 serves as the catalytic Schiff-base intermediate with acetoacetate.

The protein belongs to the ADC family.

The catalysed reaction is acetoacetate + H(+) = acetone + CO2. Catalyzes the conversion of acetoacetate to acetone and carbon dioxide. The chain is Acetoacetate decarboxylase from Streptomyces nogalater.